A 257-amino-acid polypeptide reads, in one-letter code: Thiazole synthase (257 aa).

The active-site Schiff-base intermediate with DXP is the K95. 1-deoxy-D-xylulose 5-phosphate contacts are provided by residues G156, 182-183 (AG), and 204-205 (NT).

Belongs to the ThiG family. In terms of assembly, homotetramer. Forms heterodimers with either ThiH or ThiS.

Its subcellular location is the cytoplasm. It carries out the reaction [ThiS sulfur-carrier protein]-C-terminal-Gly-aminoethanethioate + 2-iminoacetate + 1-deoxy-D-xylulose 5-phosphate = [ThiS sulfur-carrier protein]-C-terminal Gly-Gly + 2-[(2R,5Z)-2-carboxy-4-methylthiazol-5(2H)-ylidene]ethyl phosphate + 2 H2O + H(+). It participates in cofactor biosynthesis; thiamine diphosphate biosynthesis. Functionally, catalyzes the rearrangement of 1-deoxy-D-xylulose 5-phosphate (DXP) to produce the thiazole phosphate moiety of thiamine. Sulfur is provided by the thiocarboxylate moiety of the carrier protein ThiS. In vitro, sulfur can be provided by H(2)S. The protein is Thiazole synthase of Vibrio vulnificus (strain CMCP6).